The following is a 361-amino-acid chain: Alternative oxidase, mitochondrial (361 aa).

A helical transmembrane segment spans residues 155–175; that stretch reads LIRYVFLESVAGVPGMVAGML. E162, E201, and H204 together coordinate Fe cation. Residues 221 to 241 form a helical membrane-spanning segment; sequence MILGAQGVFFNSFFLCYLFSP. Fe cation is bound by residues E252, E253, E309, and H312. Residues 320–361 are disordered; the sequence is GNLKQDEDPNPFVSEYGKERGEKPGKGIESLKPVGWERDEVI. The segment covering 335–345 has biased composition (basic and acidic residues); the sequence is YGKERGEKPGK.

Belongs to the alternative oxidase family. The cofactor is Fe cation.

The protein localises to the mitochondrion inner membrane. Functionally, catalyzes cyanide-resistant oxygen consumption. May increase respiration when the cytochrome respiratory pathway is restricted, or in response to low temperatures. This Botryotinia fuckeliana (Noble rot fungus) protein is Alternative oxidase, mitochondrial (aox).